Here is a 64-residue protein sequence, read N- to C-terminus: Large ribosomal subunit protein uL29 (64 aa).

This sequence belongs to the universal ribosomal protein uL29 family.

This is Large ribosomal subunit protein uL29 from Thiobacillus denitrificans (strain ATCC 25259 / T1).